Consider the following 357-residue polypeptide: uncharacterized protein (357 aa).

The stretch at 173–211 is one HEAT repeat; sequence VLPILEKLMQDESLYVRKSVANNLNDISKTHPHLLRKVA.

This is an uncharacterized protein from Bacillus subtilis (strain 168).